The primary structure comprises 128 residues: MKKLLLTVIQIALLFIFARLINWVTALLHINIPGSIIGIVILFTLLHFNIIKLEWIELGAAWLLGELLLFFIPSAVGVIEYGDIMSKFGVSILLVVIISTFVVMVSTGTLTQLIAKRKEKKHTCSSEL.

4 helical membrane-spanning segments follow: residues 4–24, 26–46, 59–79, and 88–108; these read LLLT…INWV, ALLH…FTLL, GAAW…VGVI, and FGVS…VSTG.

Belongs to the CidA/LrgA family. CidA subfamily.

The protein localises to the cell membrane. Increases the activity of extracellular murein hydrolases possibly by mediating their export via hole formation. Inhibited by the antiholin-like proteins LrgAB. In an unstressed cell, the LrgAB products probably inhibit the function of the CidA protein. When a cell is stressed by the addition of antibiotics or by other factors in the environment, CidA possibly oligomerizes within the bacterial cell membrane, creating lesions that disrupt the proton motive force, which in turn results in loss of cell viability. These lesions are also hypothesized to regulate the subsequent cell lysis by either allowing the murein hydrolases access to the cell wall substrate and/or regulating their activity by a possible change in the cell wall pH that results from loss of membrane potential. The chain is Holin-like protein CidA from Bacillus subtilis (strain 168).